The sequence spans 239 residues: LRRN4 C-terminal-like protein (239 aa).

The N-terminal stretch at 1–19 is a signal peptide; that stretch reads MLGSLSLLWLAAMTTSLVS. At 20–194 the chain is on the extracellular side; that stretch reads QPQILTLEDY…KFIMPPKPVT (175 aa). Residues 82 to 179 form the Fibronectin type-III domain; sequence QPEPPRLGEV…EGPENWTGPS (98 aa). Asn-132 and Asn-174 each carry an N-linked (GlcNAc...) asparagine glycan. Residues 195–215 traverse the membrane as a helical segment; the sequence is LVYAAVGVGTALALLSCAALV. Over 216-239 the chain is Cytoplasmic; the sequence is WHFCLRERWGCPRRQGMAQASEAL.

It localises to the membrane. This Mus musculus (Mouse) protein is LRRN4 C-terminal-like protein (Lrrn4cl).